Consider the following 237-residue polypeptide: MRKVSLALSAACLLFTLNYTASALASSPSPLNPGTNVAKLAEQAPVHWVSVAQIEKSLTGRPPMAVGFDIDDTVLFSSPGFWRGKKMYSPDSEEYLKNPAFWEKMNNGWDEFSIPKEVARQLIALHLRRGDSIFFVTGRSQTSNERVSKTLADDFLIPATVMNPVIFAGDKPGQNSKIQWLQAKNIRIFYGDSDNDIAAARELGIRGIRILRASNSTYKPLPQAGAFGEEVIVNSEY.

The signal sequence occupies residues 1–25 (MRKVSLALSAACLLFTLNYTASALA). The active-site Nucleophile is the Asp69. Residues Asp69 and Asp71 each contribute to the Mg(2+) site. Residue Asp71 is the Proton donor of the active site. Residues 137–138 (TG) and Lys177 contribute to the substrate site. A Mg(2+)-binding site is contributed by Asp192.

It belongs to the class B bacterial acid phosphatase family. Homotetramer. The cofactor is Mg(2+).

Its subcellular location is the periplasm. It catalyses the reaction a phosphate monoester + H2O = an alcohol + phosphate. Functionally, dephosphorylates several organic phosphate monoesters. Also has a phosphotransferase activity catalyzing the transfer of low-energy phosphate groups from organic phosphate monoesters to free hydroxyl groups of various organic compounds. This Citrobacter rodentium (strain ICC168) (Citrobacter freundii biotype 4280) protein is Class B acid phosphatase.